A 680-amino-acid polypeptide reads, in one-letter code: MIDRYKHQQLRIGLVSPQQISAWATKKIPNGEIVGEVTKPYTFHYKTNKPEKDGLFCERIFGPIKSGICACGNYRVIGDEKEDSKFCEQCGVEFIDSRIRRYQMGYIKLTCPVTHVWYLKRLPSYIANLLDKPLKELEGLVYCDFSFARPITKKPTFLRLRGSFEYEIQSWKYSLPLFFTTQGFDIFRNREISTGAGAIREQLADLDLRIIIENSLVEWKQLGEEGPTGNEWEDRKIVRRKDFLVRRMELAKHFIRTNIEPEWMILCLLPVLPPELRPIIQIEGGKLMSSDINELYRRVIYRNNTLTDLLTTSRSTPGELVMCQEKLVQEAVDTLLDNGIRGQPMRDGHNKVYKSFSDVIEGKEGRFRETLLGKRVDYSGRSVIVVGPSLSLHRCGLPREIAIELFQTFVIRGLIRQHLASNIGVAKSQIREKKPVVWEILQEVMQGHPVLLNRAPTLHRLGIQSFQPILVEGRTICLHPLVCKGFNADFDGDQMAVHVPLSLEAQAEARLLMFSHMNLLSPAIGDPISVPTQDMLIGLYVLTSGTRRGICANRYNPCNRKNSQNERIYETNYKYMKEPFFCNSYDAIGAYRQKRINLDSPLWLRWQLDQRVIASREVPIEVHYESFGNYHEIYAHYLIVRSVKKETFFIYIRTTVGHISFYREIEEAIQGFSQACSYDT.

The Zn(2+) site is built by Cys-69, Cys-71, Cys-87, and Cys-90. Residues Asp-489, Asp-491, and Asp-493 each coordinate Mg(2+).

It belongs to the RNA polymerase beta' chain family. RpoC1 subfamily. As to quaternary structure, in plastids the minimal PEP RNA polymerase catalytic core is composed of four subunits: alpha, beta, beta', and beta''. When a (nuclear-encoded) sigma factor is associated with the core the holoenzyme is formed, which can initiate transcription. It depends on Mg(2+) as a cofactor. Zn(2+) serves as cofactor.

It localises to the plastid. Its subcellular location is the chloroplast. It carries out the reaction RNA(n) + a ribonucleoside 5'-triphosphate = RNA(n+1) + diphosphate. Functionally, DNA-dependent RNA polymerase catalyzes the transcription of DNA into RNA using the four ribonucleoside triphosphates as substrates. The chain is DNA-directed RNA polymerase subunit beta' from Arabis hirsuta (Hairy rock-cress).